Consider the following 166-residue polypeptide: Large ribosomal subunit protein uL10 (166 aa).

Belongs to the universal ribosomal protein uL10 family. Part of the ribosomal stalk of the 50S ribosomal subunit. The N-terminus interacts with L11 and the large rRNA to form the base of the stalk. The C-terminus forms an elongated spine to which L12 dimers bind in a sequential fashion forming a multimeric L10(L12)X complex.

Functionally, forms part of the ribosomal stalk, playing a central role in the interaction of the ribosome with GTP-bound translation factors. In Limosilactobacillus reuteri (strain DSM 20016) (Lactobacillus reuteri), this protein is Large ribosomal subunit protein uL10.